The primary structure comprises 74 residues: U19-theraphotoxin-Cg1a (74 aa).

The signal sequence occupies residues 1 to 7; it reads IMFVWAS. The propeptide occupies 8 to 36; that stretch reads AAEVEERGSDQRDSPASLKSMETIFQSEQ. Cystine bridges form between Cys-39–Cys-53, Cys-46–Cys-58, and Cys-52–Cys-66.

The protein belongs to the neurotoxin 10 (Hwtx-1) family. 38 (Jztx-33) subfamily. Expressed by the venom gland.

It localises to the secreted. Functionally, probable ion channel inhibitor. This chain is U19-theraphotoxin-Cg1a, found in Chilobrachys guangxiensis (Chinese earth tiger tarantula).